The following is a 79-amino-acid chain: Small ribosomal subunit protein uS17 (79 aa).

The protein belongs to the universal ribosomal protein uS17 family. In terms of assembly, part of the 30S ribosomal subunit.

Functionally, one of the primary rRNA binding proteins, it binds specifically to the 5'-end of 16S ribosomal RNA. The chain is Small ribosomal subunit protein uS17 from Roseobacter denitrificans (strain ATCC 33942 / OCh 114) (Erythrobacter sp. (strain OCh 114)).